We begin with the raw amino-acid sequence, 530 residues long: Glucose-6-phosphate isomerase (530 aa).

E322 (proton donor) is an active-site residue. Residues H351 and K455 contribute to the active site.

Belongs to the GPI family.

The protein localises to the cytoplasm. It catalyses the reaction alpha-D-glucose 6-phosphate = beta-D-fructose 6-phosphate. The protein operates within carbohydrate biosynthesis; gluconeogenesis. It functions in the pathway carbohydrate degradation; glycolysis; D-glyceraldehyde 3-phosphate and glycerone phosphate from D-glucose: step 2/4. In terms of biological role, catalyzes the reversible isomerization of glucose-6-phosphate to fructose-6-phosphate. This chain is Glucose-6-phosphate isomerase, found in Geotalea daltonii (strain DSM 22248 / JCM 15807 / FRC-32) (Geobacter daltonii).